A 154-amino-acid chain; its full sequence is Ribonuclease H (154 aa).

One can recognise an RNase H type-1 domain in the interval Glu5–Asp146. Mg(2+) contacts are provided by Asp14, Glu52, Asp74, and Asp138.

This sequence belongs to the RNase H family. In terms of assembly, monomer. The cofactor is Mg(2+).

The protein localises to the cytoplasm. The enzyme catalyses Endonucleolytic cleavage to 5'-phosphomonoester.. Functionally, endonuclease that specifically degrades the RNA of RNA-DNA hybrids. This Coxiella burnetii (strain CbuG_Q212) (Coxiella burnetii (strain Q212)) protein is Ribonuclease H.